Reading from the N-terminus, the 250-residue chain is Imidazole glycerol phosphate synthase subunit HisF (250 aa).

Active-site residues include D11 and D130.

The protein belongs to the HisA/HisF family. Heterodimer of HisH and HisF.

Its subcellular location is the cytoplasm. The enzyme catalyses 5-[(5-phospho-1-deoxy-D-ribulos-1-ylimino)methylamino]-1-(5-phospho-beta-D-ribosyl)imidazole-4-carboxamide + L-glutamine = D-erythro-1-(imidazol-4-yl)glycerol 3-phosphate + 5-amino-1-(5-phospho-beta-D-ribosyl)imidazole-4-carboxamide + L-glutamate + H(+). It functions in the pathway amino-acid biosynthesis; L-histidine biosynthesis; L-histidine from 5-phospho-alpha-D-ribose 1-diphosphate: step 5/9. Functionally, IGPS catalyzes the conversion of PRFAR and glutamine to IGP, AICAR and glutamate. The HisF subunit catalyzes the cyclization activity that produces IGP and AICAR from PRFAR using the ammonia provided by the HisH subunit. In Bacteroides fragilis (strain ATCC 25285 / DSM 2151 / CCUG 4856 / JCM 11019 / LMG 10263 / NCTC 9343 / Onslow / VPI 2553 / EN-2), this protein is Imidazole glycerol phosphate synthase subunit HisF.